We begin with the raw amino-acid sequence, 1038 residues long: Protein transport protein SEC24 A (1038 aa).

The tract at residues 1-247 (MGTENQGYPN…PPHTGGFAQR (247 aa)) is disordered. The span at 22–33 (SAPPPGIPPQSG) shows a compositional bias: pro residues. Residues Cys-371, Cys-374, Cys-393, and Cys-396 each coordinate Zn(2+). The tract at residues 371-396 (CRRCRTYVNPFVTFTDSGRKWRCNIC) is zinc finger-like.

This sequence belongs to the SEC23/SEC24 family. SEC24 subfamily. As to quaternary structure, component of the coat protein complex II (COPII), composed of at least five proteins: the Sec23/24 complex, the Sec13/31 complex and Sar1. Interacts with SEC221, SEC23E/SEC23A, SEC23B, SEC23G/SEC23C and SEC23F/SEC23D. (Microbial infection) Interacts with turnip mosaic virus (TuMV) 6K2 in COPII-coated vesicles. In terms of tissue distribution, mainly expressed in pollen, leaves, inflorescences, roots and stems, and, to a lower extent, in cotyledons, petioles and hypocotyls.

It is found in the cytoplasmic vesicle. Its subcellular location is the COPII-coated vesicle membrane. The protein localises to the endoplasmic reticulum membrane. The protein resides in the golgi apparatus membrane. It localises to the cytoplasm. It is found in the cytosol. Essential protein. Component of the coat protein complex II (COPII), that covers ER-derived vesicles involved in transport from the endoplasmic reticulum to the Golgi apparatus. COPII is composed of at least five proteins: the SEC23/24 complex, the SEC13/31 complex, and the protein SAR1. Acts in the cytoplasm to promote the transport of secretory, plasma membrane, and vacuolar proteins from the endoplasmic reticulum to the Golgi complex. Involved in maintaining the dynamic identity of organelles of the early secretory pathway. Regulates cell size patterning, and prevents CDKA;1-, DEK1- and ACR4-dependent endoreduplication and giant cells formation in sepals. Required for male gametophytes (pollen grains) development and transmission. Its function is as follows. (Microbial infection) Contributes to viral systemic infection of turnip mosaic virus (TuMV) by triggering the formation of host endoplasmic reticulum (ER)-derived viral vesicles that carry the viral RNA (vRNA) to plasmodesmata for cell-to-cell viral movement. The chain is Protein transport protein SEC24 A from Arabidopsis thaliana (Mouse-ear cress).